The following is a 218-amino-acid chain: UPF0711 protein C18orf21 homolog (218 aa).

S126 carries the post-translational modification Phosphoserine. A compositionally biased stretch (low complexity) spans 130 to 146 (ASAASKASPKTPKRAAA). Residues 130–192 (ASAASKASPK…NGSKRKKHFS (63 aa)) form a disordered region. T140 is subject to Phosphothreonine. Residues 147–156 (GSTNISQSVH) show a composition bias toward polar residues. Residues 161–172 (RSPSSTVRTPTS) are compositionally biased toward low complexity. The span at 173–183 (GQSTPICSSRN) shows a compositional bias: polar residues.

This sequence belongs to the UPF0711 family.

The protein is UPF0711 protein C18orf21 homolog of Rattus norvegicus (Rat).